Reading from the N-terminus, the 712-residue chain is Ribosomal RNA large subunit methyltransferase K/L (712 aa).

Positions 46–157 (GAYQALLHSR…RENMVVSLDL (112 aa)) constitute a THUMP domain.

The protein belongs to the methyltransferase superfamily. RlmKL family.

The protein localises to the cytoplasm. The enzyme catalyses guanosine(2445) in 23S rRNA + S-adenosyl-L-methionine = N(2)-methylguanosine(2445) in 23S rRNA + S-adenosyl-L-homocysteine + H(+). It carries out the reaction guanosine(2069) in 23S rRNA + S-adenosyl-L-methionine = N(2)-methylguanosine(2069) in 23S rRNA + S-adenosyl-L-homocysteine + H(+). Functionally, specifically methylates the guanine in position 2445 (m2G2445) and the guanine in position 2069 (m7G2069) of 23S rRNA. This Actinobacillus pleuropneumoniae serotype 3 (strain JL03) protein is Ribosomal RNA large subunit methyltransferase K/L.